Reading from the N-terminus, the 60-residue chain is Large ribosomal subunit protein bL32 (60 aa).

Over residues 1–23 (MAKHPVPKKKTSKSKRDMRRSHH) the composition is skewed to basic residues. A disordered region spans residues 1–26 (MAKHPVPKKKTSKSKRDMRRSHHALV).

It belongs to the bacterial ribosomal protein bL32 family.

This is Large ribosomal subunit protein bL32 from Deinococcus geothermalis (strain DSM 11300 / CIP 105573 / AG-3a).